A 365-amino-acid polypeptide reads, in one-letter code: Protein RecA (365 aa).

An ATP-binding site is contributed by G81–T88.

The protein belongs to the RecA family.

The protein resides in the cytoplasm. Functionally, can catalyze the hydrolysis of ATP in the presence of single-stranded DNA, the ATP-dependent uptake of single-stranded DNA by duplex DNA, and the ATP-dependent hybridization of homologous single-stranded DNAs. It interacts with LexA causing its activation and leading to its autocatalytic cleavage. The protein is Protein RecA of Borreliella afzelii (strain PKo) (Borrelia afzelii).